The following is a 2566-amino-acid chain: Highly reducing polyketide synthase verA (2566 aa).

The 438-residue stretch at 3 to 440 (PEPIAIIGTG…GTNAHAILES (438 aa)) folds into the Ketosynthase family 3 (KS3) domain. Residues 35–61 (VASEPPSTRFDNRSFYDPDPSHPGTTN) form a disordered region. A compositionally biased stretch (basic and acidic residues) spans 44–54 (FDNRSFYDPDP). Residues Cys176, His316, and His360 each act as for beta-ketoacyl synthase activity in the active site. The malonyl-CoA:ACP transacylase (MAT) domain stretch occupies residues 554–880 (IFTGQGAQWP…IGLSNRGASG (327 aa)). The active-site For malonyltransferase activity is the Ser648. The tract at residues 950 to 1081 (HPLLGSLEAD…GKLLICWGNP (132 aa)) is N-terminal hotdog fold. The segment at 950–1246 (HPLLGSLEAD…EGVHISPLGP (297 aa)) is dehydratase (DH) domain. The PKS/mFAS DH domain maps to 950–1250 (HPLLGSLEAD…ISPLGPPDRQ (301 aa)). His982 (proton acceptor; for dehydratase activity) is an active-site residue. The segment at 1096-1250 (AGAVDIKDFY…ISPLGPPDRQ (155 aa)) is C-terminal hotdog fold. Catalysis depends on Asp1156, which acts as the Proton donor; for dehydratase activity. The methyltransferase (CMet) domain stretch occupies residues 1386–1581 (DVLSRFYKED…TGFGGIDTIT (196 aa)). Residues 2127 to 2294 (KTYLLVGMTG…RRARNIVGSI (168 aa)) are ketoreductase (KR) domain. The 79-residue stretch at 2411–2489 (EAAEIVAAGL…ALTADSVSKL (79 aa)) folds into the Carrier domain. The residue at position 2449 (Ser2449) is an O-(pantetheine 4'-phosphoryl)serine. The interval 2505–2540 (KDVSGLTSPPEVPSDASRSSVSSGMDEIVTPESPSF) is disordered. The span at 2518 to 2527 (SDASRSSVSS) shows a compositional bias: low complexity.

The cofactor is pantetheine 4'-phosphate.

It participates in secondary metabolite biosynthesis; terpenoid biosynthesis. It functions in the pathway mycotoxin biosynthesis. Its function is as follows. Highly reducing polyketide synthase (HR-PKS); part of the gene cluster that mediates the biosynthesis of the neurotoxin verrucosidin, a methylated alpha-pyrone polyketide that inhibits oxidative phosphorylation in mitochondria and thereby causes neurological diseases. The carbon backbone of verrucosidin is synthesized by the HR-PKS verA, and further modified by the other verrucodidin cluster enzymes. This Penicillium polonicum protein is Highly reducing polyketide synthase verA.